We begin with the raw amino-acid sequence, 382 residues long: Chaperone protein DnaJ (382 aa).

Positions D5–G70 constitute a J domain. The segment at G134–K212 adopts a CR-type zinc-finger fold. The Zn(2+) site is built by C147, C150, C164, C167, C186, C189, C200, and C203. CXXCXGXG motif repeat units lie at residues C147–G154, C164–G171, C186–G193, and C200–G207.

Belongs to the DnaJ family. Homodimer. Requires Zn(2+) as cofactor.

The protein resides in the cytoplasm. Participates actively in the response to hyperosmotic and heat shock by preventing the aggregation of stress-denatured proteins and by disaggregating proteins, also in an autonomous, DnaK-independent fashion. Unfolded proteins bind initially to DnaJ; upon interaction with the DnaJ-bound protein, DnaK hydrolyzes its bound ATP, resulting in the formation of a stable complex. GrpE releases ADP from DnaK; ATP binding to DnaK triggers the release of the substrate protein, thus completing the reaction cycle. Several rounds of ATP-dependent interactions between DnaJ, DnaK and GrpE are required for fully efficient folding. Also involved, together with DnaK and GrpE, in the DNA replication of plasmids through activation of initiation proteins. This Haemophilus influenzae (strain PittGG) protein is Chaperone protein DnaJ.